The following is a 347-amino-acid chain: uncharacterized protein (347 aa).

This is an uncharacterized protein from Magallana gigas (Pacific oyster).